The following is a 273-amino-acid chain: Progestin and adipoQ receptor family member 4 (273 aa).

The next 5 membrane-spanning stretches (helical) occupy residues isoleucine 52–tryptophan 72, glycine 79–tyrosine 99, leucine 115–isoleucine 135, leucine 185–cysteine 205, and leucine 245–alanine 265.

This sequence belongs to the ADIPOR family. Interacts with CERS2 and CERS5; the interaction regulates CERS2 and CERS5 stabilities and activities and is inhibited in presence of ceramides. As to expression, expressed in adipose tissue.

The protein localises to the golgi apparatus membrane. In terms of biological role, plays a role in maintaining adipose tissue function through the regulation of ceramide levels. Mediates the stability of ceramide synthetases, CERS2 and CERS5, and their activities. The chain is Progestin and adipoQ receptor family member 4 from Mus musculus (Mouse).